A 776-amino-acid chain; its full sequence is LPS-assembly protein LptD (776 aa).

The first 24 residues, 1–24 (MQHFSRTFLAASIATALFAPYAQA), serve as a signal peptide directing secretion.

This sequence belongs to the LptD family. As to quaternary structure, component of the lipopolysaccharide transport and assembly complex. Interacts with LptE and LptA.

The protein resides in the cell outer membrane. In terms of biological role, together with LptE, is involved in the assembly of lipopolysaccharide (LPS) at the surface of the outer membrane. This Vibrio vulnificus (strain CMCP6) protein is LPS-assembly protein LptD.